We begin with the raw amino-acid sequence, 252 residues long: MKVLNLGSKKQASFYVACELYKEMAFNQHCKLGLATGGTMTDLYEQLVKLLNKNQLNVDNVSTFNLDEYVGLTASHPQSYHYYMDAMLFKQYPYFNRKNIHIPNGDADDMNAEASKYNDVLEQQGQRDIQILGIGENGHIGFNEPGTPFDSVTHIVDLTESTIKANSRYFENEDDVPKQAISMGLANILQAKRIILLAFGEKKRAAITHLLNQEISVDVPATLLHKHPNVEIYLDDEACPKNVAKIHVDEMD.

The Proton acceptor; for enolization step role is filled by Asp-67. Catalysis depends on Asn-137, which acts as the For ring-opening step. Residue His-139 is the Proton acceptor; for ring-opening step of the active site. Glu-144 (for ring-opening step) is an active-site residue.

The protein belongs to the glucosamine/galactosamine-6-phosphate isomerase family. NagB subfamily.

It carries out the reaction alpha-D-glucosamine 6-phosphate + H2O = beta-D-fructose 6-phosphate + NH4(+). It functions in the pathway amino-sugar metabolism; N-acetylneuraminate degradation; D-fructose 6-phosphate from N-acetylneuraminate: step 5/5. In terms of biological role, catalyzes the reversible isomerization-deamination of glucosamine 6-phosphate (GlcN6P) to form fructose 6-phosphate (Fru6P) and ammonium ion. This is Glucosamine-6-phosphate deaminase from Staphylococcus aureus (strain bovine RF122 / ET3-1).